The chain runs to 359 residues: 3-dehydroquinate synthase (359 aa).

Residues 70–75, 105–109, 129–130, lysine 142, lysine 151, and 169–172 contribute to the NAD(+) site; these read DGEQYK, GVIGD, TT, and FYKT. Residues glutamate 184, histidine 247, and histidine 264 each coordinate Zn(2+).

It belongs to the sugar phosphate cyclases superfamily. Dehydroquinate synthase family. Requires Co(2+) as cofactor. Zn(2+) serves as cofactor. The cofactor is NAD(+).

The protein localises to the cytoplasm. It catalyses the reaction 7-phospho-2-dehydro-3-deoxy-D-arabino-heptonate = 3-dehydroquinate + phosphate. It participates in metabolic intermediate biosynthesis; chorismate biosynthesis; chorismate from D-erythrose 4-phosphate and phosphoenolpyruvate: step 2/7. Its function is as follows. Catalyzes the conversion of 3-deoxy-D-arabino-heptulosonate 7-phosphate (DAHP) to dehydroquinate (DHQ). The protein is 3-dehydroquinate synthase of Francisella tularensis subsp. holarctica (strain FTNF002-00 / FTA).